A 1081-amino-acid polypeptide reads, in one-letter code: Carbamoyl phosphate synthase large chain (1081 aa).

The segment at 1-403 (MPRRNDLNKI…SFQKALRSLE (403 aa)) is carboxyphosphate synthetic domain. Arg129, Arg170, Gly177, Lys209, Leu211, Glu216, Gly242, Val243, His244, Gln286, and Glu300 together coordinate ATP. Residues 133-329 (KEAMARIGVP…IAKFAAKLAV (197 aa)) enclose the ATP-grasp 1 domain. The Mg(2+) site is built by Gln286, Glu300, and Asn302. Mn(2+)-binding residues include Gln286, Glu300, and Asn302. Residues 404–553 (TGRFGFGCDR…STYEPEECEV (150 aa)) are oligomerization domain. The carbamoyl phosphate synthetic domain stretch occupies residues 554-944 (LPSDKPKVMI…AFAKAELGAG (391 aa)). One can recognise an ATP-grasp 2 domain in the interval 686-878 (EKILHELEIS…LAKIASLVMS (193 aa)). ATP is bound by residues Arg722, Lys761, Leu763, Glu768, Gly794, Ile795, His796, Ser797, Gln837, and Glu849. Residues Gln837, Glu849, and Asn851 each contribute to the Mg(2+) site. 3 residues coordinate Mn(2+): Gln837, Glu849, and Asn851. An MGS-like domain is found at 945-1081 (VILATTGTVF…DVKALQDYLG (137 aa)). The interval 945–1081 (VILATTGTVF…DVKALQDYLG (137 aa)) is allosteric domain.

It belongs to the CarB family. In terms of assembly, composed of two chains; the small (or glutamine) chain promotes the hydrolysis of glutamine to ammonia, which is used by the large (or ammonia) chain to synthesize carbamoyl phosphate. Tetramer of heterodimers (alpha,beta)4. Requires Mg(2+) as cofactor. It depends on Mn(2+) as a cofactor.

It carries out the reaction hydrogencarbonate + L-glutamine + 2 ATP + H2O = carbamoyl phosphate + L-glutamate + 2 ADP + phosphate + 2 H(+). The enzyme catalyses hydrogencarbonate + NH4(+) + 2 ATP = carbamoyl phosphate + 2 ADP + phosphate + 2 H(+). It functions in the pathway amino-acid biosynthesis; L-arginine biosynthesis; carbamoyl phosphate from bicarbonate: step 1/1. The protein operates within pyrimidine metabolism; UMP biosynthesis via de novo pathway; (S)-dihydroorotate from bicarbonate: step 1/3. Its function is as follows. Large subunit of the glutamine-dependent carbamoyl phosphate synthetase (CPSase). CPSase catalyzes the formation of carbamoyl phosphate from the ammonia moiety of glutamine, carbonate, and phosphate donated by ATP, constituting the first step of 2 biosynthetic pathways, one leading to arginine and/or urea and the other to pyrimidine nucleotides. The large subunit (synthetase) binds the substrates ammonia (free or transferred from glutamine from the small subunit), hydrogencarbonate and ATP and carries out an ATP-coupled ligase reaction, activating hydrogencarbonate by forming carboxy phosphate which reacts with ammonia to form carbamoyl phosphate. In Synechocystis sp. (strain ATCC 27184 / PCC 6803 / Kazusa), this protein is Carbamoyl phosphate synthase large chain.